A 360-amino-acid chain; its full sequence is Phospho-N-acetylmuramoyl-pentapeptide-transferase (360 aa).

10 consecutive transmembrane segments (helical) span residues 27–47 (GAIA…IKSL), 72–92 (TPTM…LLWA), 94–114 (LSNH…AIGF), 135–155 (LACE…LGTP), 167–187 (GYVV…IVAS), 199–219 (GLAI…AYLV), 236–256 (AGEL…FLWF), 263–283 (IFMG…IAVA), 289–309 (VLAI…VQVV), and 337–357 (QVVV…LSTL).

The protein belongs to the glycosyltransferase 4 family. MraY subfamily. The cofactor is Mg(2+).

The protein resides in the cell inner membrane. It catalyses the reaction UDP-N-acetyl-alpha-D-muramoyl-L-alanyl-gamma-D-glutamyl-meso-2,6-diaminopimeloyl-D-alanyl-D-alanine + di-trans,octa-cis-undecaprenyl phosphate = di-trans,octa-cis-undecaprenyl diphospho-N-acetyl-alpha-D-muramoyl-L-alanyl-D-glutamyl-meso-2,6-diaminopimeloyl-D-alanyl-D-alanine + UMP. It participates in cell wall biogenesis; peptidoglycan biosynthesis. Functionally, catalyzes the initial step of the lipid cycle reactions in the biosynthesis of the cell wall peptidoglycan: transfers peptidoglycan precursor phospho-MurNAc-pentapeptide from UDP-MurNAc-pentapeptide onto the lipid carrier undecaprenyl phosphate, yielding undecaprenyl-pyrophosphoryl-MurNAc-pentapeptide, known as lipid I. The chain is Phospho-N-acetylmuramoyl-pentapeptide-transferase from Beijerinckia indica subsp. indica (strain ATCC 9039 / DSM 1715 / NCIMB 8712).